The following is an 885-amino-acid chain: Translation initiation factor IF-2 (885 aa).

2 disordered regions span residues 135 to 159 (KAKA…AAAE) and 184 to 289 (QAEA…PESM). Over residues 184–232 (QAEATKRKQDEEAAKAAEKARLLAEENSKRWAEEERQRLEAERYSDHHI) the composition is skewed to basic and acidic residues. Over residues 253–266 (GRRARNKNTAKSKR) the composition is skewed to basic residues. The segment covering 267 to 276 (GGKDARDGRE) has biased composition (basic and acidic residues). Residues 385-554 (PRAPVVTIMG…LLQAEVLELK (170 aa)) form the tr-type G domain. A G1 region spans residues 394–401 (GHVDHGKT). Residue 394-401 (GHVDHGKT) participates in GTP binding. The G2 stretch occupies residues 419–423 (GITQH). The interval 440–443 (DTPG) is G3. GTP-binding positions include 440–444 (DTPGH) and 494–497 (NKMD). A G4 region spans residues 494 to 497 (NKMD). The segment at 530 to 532 (SAK) is G5.

Belongs to the TRAFAC class translation factor GTPase superfamily. Classic translation factor GTPase family. IF-2 subfamily.

Its subcellular location is the cytoplasm. Functionally, one of the essential components for the initiation of protein synthesis. Protects formylmethionyl-tRNA from spontaneous hydrolysis and promotes its binding to the 30S ribosomal subunits. Also involved in the hydrolysis of GTP during the formation of the 70S ribosomal complex. This chain is Translation initiation factor IF-2, found in Shewanella sp. (strain MR-7).